A 1962-amino-acid polypeptide reads, in one-letter code: Myosin heavy chain, muscle (1962 aa).

In terms of domain architecture, Myosin N-terminal SH3-like spans 33–82 (DSKKSCWIPDEKEGYLLGEIKATKGDIVSVGLQGGEVRDIKSEKVEKVNP). Positions 86 to 777 (EKIEDMADMT…VLGQMEEFRD (692 aa)) constitute a Myosin motor domain. 179-186 (GESGAGKT) contacts ATP. An actin-binding region spans residues 656-678 (LNSLMTTLRSTQPHFVRCIIPNE). The 30-residue stretch at 780–809 (LGKIMSWMQAWARGYLSRKGFKKLQEQRVA) folds into the IQ domain. Residues 802–1927 (KLQEQRVALK…KFRAKGRAGS (1126 aa)) are a coiled coil. Disordered regions lie at residues 1822-1862 (ENEL…NHER) and 1922-1962 (KGRA…ENEF).

The protein belongs to the TRAFAC class myosin-kinesin ATPase superfamily. Myosin family. As to quaternary structure, muscle myosin is a hexameric protein that consists of 2 heavy chain subunits (MHC), 2 alkali light chain subunits (MLC) and 2 regulatory light chain subunits (MLC-2). In terms of tissue distribution, expressed in larval and adult muscles. Isoforms containing exon 9a are expressed in indirect flight muscles, exons 9a and 9b are expressed in jump muscles, exons 9b and 9c are expressed in other larval and adult muscles.

It is found in the cytoplasm. Its subcellular location is the myofibril. Functionally, muscle contraction. The polypeptide is Myosin heavy chain, muscle (Mhc) (Drosophila melanogaster (Fruit fly)).